Reading from the N-terminus, the 412-residue chain is Imidazolonepropionase (412 aa).

2 residues coordinate Fe(3+): histidine 76 and histidine 78. Residues histidine 76 and histidine 78 each coordinate Zn(2+). Residues arginine 85, tyrosine 148, and histidine 181 each contribute to the 4-imidazolone-5-propanoate site. Tyrosine 148 contacts N-formimidoyl-L-glutamate. Histidine 242 provides a ligand contact to Fe(3+). A Zn(2+)-binding site is contributed by histidine 242. Glutamate 245 is a 4-imidazolone-5-propanoate binding site. Aspartate 317 contacts Fe(3+). Aspartate 317 is a binding site for Zn(2+). N-formimidoyl-L-glutamate-binding residues include asparagine 319 and glycine 321. 4-imidazolone-5-propanoate is bound at residue serine 322.

This sequence belongs to the metallo-dependent hydrolases superfamily. HutI family. Zn(2+) serves as cofactor. The cofactor is Fe(3+).

It localises to the cytoplasm. It carries out the reaction 4-imidazolone-5-propanoate + H2O = N-formimidoyl-L-glutamate. The protein operates within amino-acid degradation; L-histidine degradation into L-glutamate; N-formimidoyl-L-glutamate from L-histidine: step 3/3. Catalyzes the hydrolytic cleavage of the carbon-nitrogen bond in imidazolone-5-propanoate to yield N-formimidoyl-L-glutamate. It is the third step in the universal histidine degradation pathway. The polypeptide is Imidazolonepropionase (Staphylococcus aureus (strain MRSA252)).